The primary structure comprises 122 residues: Large ribosomal subunit protein uL14 (122 aa).

The protein belongs to the universal ribosomal protein uL14 family. As to quaternary structure, part of the 50S ribosomal subunit. Forms a cluster with proteins L3 and L19. In the 70S ribosome, L14 and L19 interact and together make contacts with the 16S rRNA in bridges B5 and B8. Can interact with ribosomal silencing factor RsfS, which may inhibit ribosomal subunit association.

Its function is as follows. Binds to 23S rRNA. Forms part of two intersubunit bridges in the 70S ribosome. The chain is Large ribosomal subunit protein uL14 from Synechocystis sp. (strain ATCC 27184 / PCC 6803 / Kazusa).